The sequence spans 1194 residues: Phosphatidylinositol-3,5-bisphosphate 3-phosphatase MTMR3 (1194 aa).

S4 is subject to Phosphoserine. Positions 151 to 572 (EHVTSRFKNE…RNLMLWSAVY (422 aa)) constitute a Myotubularin phosphatase domain. The a 1,2-diacyl-sn-glycero-3-phospho-(1D-myo-inositol-3,5-bisphosphate) site is built by N322, N347, and I348. N322, N347, and I348 together coordinate a 1,2-diacyl-sn-glycero-3-phospho-(1D-myo-inositol-3-phosphate). C409 acts as the Phosphocysteine intermediate in catalysis. Residues S410, D411, G412, W413, D414, R415, K451, and R455 each contribute to the a 1,2-diacyl-sn-glycero-3-phospho-(1D-myo-inositol-3,5-bisphosphate) site. A 1,2-diacyl-sn-glycero-3-phospho-(1D-myo-inositol-3-phosphate) is bound by residues S410, D411, G412, W413, D414, and R415. Residue R455 coordinates a 1,2-diacyl-sn-glycero-3-phospho-(1D-myo-inositol-3-phosphate). The segment at 583–609 (DDSCAPYPAPGTSPDEPPLSRLPKTRS) is disordered. Residues 589–599 (YPAPGTSPDEP) show a composition bias toward pro residues. 4 positions are modified to phosphoserine: S609, S629, S643, and S647. The span at 693–724 (TKEESGVEEPTHREHTEVPEVKEEAPLAKESR) shows a compositional bias: basic and acidic residues. Disordered stretches follow at residues 693 to 731 (TKEESGVEEPTHREHTEVPEVKEEAPLAKESRTAAQGSG), 852 to 871 (ESGPQLHHRPCLASSGRFSG), and 876 to 897 (PIAPEPRSAERPQWDSVLHRTS). Residue T725 is modified to Phosphothreonine. S904 bears the Phosphoserine mark. Disordered regions lie at residues 932–971 (NKASEQPAGFDTLQKYPTPNGHCANGETGRSKDSLSHQLS) and 988–1017 (KWLNSHSGRPSTTNSPEQPSRSHLDDDGMP). Positions 991–1006 (NSHSGRPSTTNSPEQP) are enriched in polar residues. The stretch at 1025–1058 (QRLRQIESGHQQEVETLKKQVQELKSRLESQYLT) forms a coiled coil. S1060 carries the post-translational modification Phosphoserine. The FYVE-type zinc-finger motif lies at 1115–1175 (DHLAAHCYAC…VCKSCYSSLH (61 aa)). C1121, C1124, C1137, C1140, C1145, C1148, C1167, and C1170 together coordinate Zn(2+).

Belongs to the protein-tyrosine phosphatase family. Non-receptor class myotubularin subfamily. As to quaternary structure, forms heterodimers with MTMR4 that recruit both CEP55 and PLK1; occurs during early mitosis, regulates the phosphorylation of CEP55 by PLK1 and its recruitment to the midbody where it mediates cell abscission.

It is found in the cytoplasm. It localises to the cytosol. The protein resides in the membrane. The enzyme catalyses a 1,2-diacyl-sn-glycero-3-phospho-(1D-myo-inositol-3,5-bisphosphate) + H2O = a 1,2-diacyl-sn-glycero-3-phospho-(1D-myo-inositol-5-phosphate) + phosphate. It catalyses the reaction a 1,2-diacyl-sn-glycero-3-phospho-(1D-myo-inositol-3-phosphate) + H2O = a 1,2-diacyl-sn-glycero-3-phospho-(1D-myo-inositol) + phosphate. It carries out the reaction 1,2-dihexadecanoyl-sn-glycero-3-phospho-(1D-myo-inositol-3-phosphate) + H2O = 1,2-dihexadecanoyl-sn-glycero-3-phospho-(1D-myo-inositol) + phosphate. The catalysed reaction is 1,2-dioctanoyl-sn-glycero-3-phospho-(1-D-myo-inositol-3-phosphate) + H2O = 1,2-dioctanoyl-sn-glycero-3-phospho-(1D-myo-inositol) + phosphate. The enzyme catalyses 1,2-dihexadecanoyl-sn-glycero-3-phospho-(1D-myo-inositol-3,5-phosphate) + H2O = 1,2-dihexadecanoyl-sn-glycero-3-phospho-(1D-myo-inositol-5-phosphate) + phosphate. Functionally, lipid phosphatase that specifically dephosphorylates the D-3 position of phosphatidylinositol 3-phosphate and phosphatidylinositol 3,5-bisphosphate, generating phosphatidylinositol and phosphatidylinositol 5-phosphate. Decreases the levels of phosphatidylinositol 3-phosphate, a phospholipid found in cell membranes where it acts as key regulator of both cell signaling and intracellular membrane traffic. Could also have a molecular sequestering/adapter activity and regulate biological processes independently of its phosphatase activity. It includes the regulation of midbody abscission during mitotic cytokinesis. The polypeptide is Phosphatidylinositol-3,5-bisphosphate 3-phosphatase MTMR3 (Rattus norvegicus (Rat)).